Reading from the N-terminus, the 627-residue chain is Altered inheritance of mitochondria protein 9, mitochondrial (627 aa).

A mitochondrion-targeting transit peptide spans 1–43 (MIRYTVAGHSRRCVVGASKRVGAIKCITVAATKRFISNKPNEV).

This sequence belongs to the AIM9 family.

It is found in the mitochondrion. In Saccharomyces cerevisiae (strain ATCC 204508 / S288c) (Baker's yeast), this protein is Altered inheritance of mitochondria protein 9, mitochondrial (AIM9).